The primary structure comprises 326 residues: MTADRWAGRTVLVTGALGFIGSHFVRQLDARGAEVLALYRTERPEIQAELAALNRVRLVRTELRDESDVRGAFKYLAPSIDTVVHCAAMDGNAQFKLERSAEILDSNQRTISNLLNCVRDFGVGEVVVMSSSELYSASPTVAAREEDDFRRSMRYTDNGYVLSKTYGEILARLHREQFGTNVFLVRPGNVYGPGDGFDCSRGRVIPSMLAKADAGEEIEIWGDGSQTRSFVHVADLVRASLRLLETGKYPEMNVAGAEQVSILELAGMVMAVLGRPERIRLDPSRPVGAPSRLLDLSRMSEVIDFDPQPLRAGLEETARWYRLHKR.

NAD(+) contacts are provided by residues 15 to 21 (GALGFIG) and 129 to 132 (MSSS). The active-site Proton donor/acceptor is Tyr-160. NAD(+) is bound by residues Lys-164 and 187-190 (PGNV).

Belongs to the NAD(P)-dependent epimerase/dehydratase family.

It carries out the reaction dTDP-6-deoxy-alpha-D-allose + NAD(+) = dTDP-4-dehydro-6-deoxy-alpha-D-allose + NADH + H(+). It catalyses the reaction dTDP-6-deoxy-alpha-D-allose + NADP(+) = dTDP-4-dehydro-6-deoxy-alpha-D-allose + NADPH + H(+). Its function is as follows. Catalyzes the stereospecific reduction of the C-4 keto group of dTDP-4-dehydro-6-deoxy-D-allose, leading to dTDP-6-deoxy-D-allose, an intermediate in the biosynthesis of the mycinose moiety of dihydrochalcomycin (GERI-155) antibiotic. Cannot directly reduce dTDP-4-dehydro-6-deoxyglucose, and thus acts after the epimerization step catalyzed by GerF. The protein is dTDP-4-dehydro-6-deoxy-D-allose reductase (gerKI) of Streptomyces sp.